The following is a 449-amino-acid chain: GTPase Der (449 aa).

2 EngA-type G domains span residues 2-169 (FTVA…QLPP) and 180-355 (VRFC…EQLT). Residues 8 to 15 (GRPNVGKS), 55 to 59 (DTGGL), 118 to 121 (NKSE), 186 to 193 (GKPNVGKS), 233 to 237 (DTAGI), and 298 to 301 (NKWD) each bind GTP. The region spanning 356–440 (KKISTSLLND…PITLYFKSKN (85 aa)) is the KH-like domain.

Belongs to the TRAFAC class TrmE-Era-EngA-EngB-Septin-like GTPase superfamily. EngA (Der) GTPase family. In terms of assembly, associates with the 50S ribosomal subunit.

In terms of biological role, GTPase that plays an essential role in the late steps of ribosome biogenesis. This is GTPase Der from Mycoplasma pneumoniae (strain ATCC 29342 / M129 / Subtype 1) (Mycoplasmoides pneumoniae).